The primary structure comprises 849 residues: Neprilysin-1 (849 aa).

Topologically, residues 1-113 are cytoplasmic; the sequence is MSQQHEATAA…LKESQQRRRL (113 aa). Over residues 41–61 the composition is skewed to low complexity; that stretch reads QQQVQHQAPHQMQQQQQQQQQ. Residues 41–63 are disordered; the sequence is QQQVQHQAPHQMQQQQQQQQQNK. Residues 114–134 traverse the membrane as a helical; Signal-anchor for type II membrane protein segment; the sequence is LVLAIAFTVLGAAIGALAIYF. Residues 135-849 are Extracellular-facing; it reads ASVHQRCHLY…MNPAEKCSVW (715 aa). Over residues 146–155 the composition is skewed to basic and acidic residues; it reads LEPDNDDRPN. The tract at residues 146–167 is disordered; that stretch reads LEPDNDDRPNGRWNQDSGSAHE. Residues 172 to 849 form the Peptidase M13 domain; the sequence is ICMTQECVRT…MNPAEKCSVW (678 aa). 5 disulfides stabilise this stretch: cysteine 173–cysteine 178, cysteine 196–cysteine 834, cysteine 204–cysteine 794, cysteine 260–cysteine 512, and cysteine 721–cysteine 846. N-linked (GlcNAc...) asparagine glycans are attached at residues asparagine 309, asparagine 326, asparagine 393, asparagine 589, and asparagine 599. Histidine 684 is a Zn(2+) binding site. Glutamate 685 is a catalytic residue. Histidine 688 is a Zn(2+) binding site. N-linked (GlcNAc...) asparagine glycosylation occurs at asparagine 709. A Zn(2+)-binding site is contributed by glutamate 746. Aspartate 750 (proton donor) is an active-site residue. N-linked (GlcNAc...) asparagine glycosylation is present at asparagine 778.

It belongs to the peptidase M13 family. Zn(2+) serves as cofactor. As to expression, expressed in the testicular tube, near and in the seminal vesicles. In adults and third-instar larvae, expressed in the midgut and in the mushroom bodies of the brain and neurons in the pars intercerebralis. Also expressed in neurons of the ventral ganglion and imaginal disks (wing and leg) of third-instar larvae. In stage 17 embryos, expressed in the peripheral nervous system, pharynx and midgut.

Its subcellular location is the cell membrane. The enzyme catalyses Preferential cleavage of polypeptides between hydrophobic residues, particularly with Phe or Tyr at P1'.. In terms of biological role, metalloendoprotease which functions in fertility and memory formation. Required in the dorsal paired medial neurons and alpha/beta mushroom body neurons for the proper formation of long-term and middle-term memories. Required in males to maximise egg-laying in female mates and is also required in females for their fertility. This Drosophila melanogaster (Fruit fly) protein is Neprilysin-1.